The primary structure comprises 242 residues: uncharacterized protein (242 aa).

S-adenosyl-L-methionine is bound by residues Gly-198, Ile-218, and Leu-227.

Belongs to the class IV-like SAM-binding methyltransferase superfamily. RNA methyltransferase TrmH family.

This is an uncharacterized protein from Mycoplasma genitalium (strain ATCC 33530 / DSM 19775 / NCTC 10195 / G37) (Mycoplasmoides genitalium).